We begin with the raw amino-acid sequence, 201 residues long: Recombination protein RecR (201 aa).

Residues C59–C74 form a C4-type zinc finger. The region spanning S82–P177 is the Toprim domain.

It belongs to the RecR family.

Functionally, may play a role in DNA repair. It seems to be involved in an RecBC-independent recombinational process of DNA repair. It may act with RecF and RecO. This is Recombination protein RecR from Rickettsia africae (strain ESF-5).